Consider the following 437-residue polypeptide: GTPase Der (437 aa).

EngA-type G domains follow at residues 3 to 168 (PLIA…PETE) and 178 to 353 (IQLA…QNRS). GTP is bound by residues 9–16 (GRPNVGKS), 56–60 (DTGGY), 120–123 (NKVE), 184–191 (GRPNVGKS), 231–235 (DTAGL), and 296–299 (NKWD). The 84-residue stretch at 354–437 (RKISTSVLNK…VPISMRFMQK (84 aa)) folds into the KH-like domain.

This sequence belongs to the TRAFAC class TrmE-Era-EngA-EngB-Septin-like GTPase superfamily. EngA (Der) GTPase family. In terms of assembly, associates with the 50S ribosomal subunit.

GTPase that plays an essential role in the late steps of ribosome biogenesis. The protein is GTPase Der of Pelodictyon phaeoclathratiforme (strain DSM 5477 / BU-1).